The primary structure comprises 341 residues: 4-hydroxy-2-oxovalerate aldolase 2 (341 aa).

The Pyruvate carboxyltransferase domain occupies 8–260; it reads VTVHDMTLRD…ETGVDVAKIT (253 aa). Position 16 to 17 (16 to 17) interacts with substrate; that stretch reads RD. Asp17 is a Mn(2+) binding site. His20 acts as the Proton acceptor in catalysis. Residues Ser170 and His199 each coordinate substrate. Positions 199 and 201 each coordinate Mn(2+). Tyr290 contacts substrate.

This sequence belongs to the 4-hydroxy-2-oxovalerate aldolase family.

It carries out the reaction (S)-4-hydroxy-2-oxopentanoate = acetaldehyde + pyruvate. The protein is 4-hydroxy-2-oxovalerate aldolase 2 of Dechloromonas aromatica (strain RCB).